We begin with the raw amino-acid sequence, 1365 residues long: Histone-lysine N-methyltransferase NSD2 (1365 aa).

Residues threonine 110 and threonine 114 each carry the phosphothreonine modification. Serine 121 bears the Phosphoserine mark. Residues alanine 149 to arginine 169 form a disordered region. Position 172 is a phosphoserine (serine 172). The region spanning valine 222–glycine 286 is the PWWP 1 domain. 3 disordered regions span residues methionine 373 to aspartate 455, glutamine 513 to alanine 567, and cysteine 594 to serine 658. Serine 376 carries the phosphoserine modification. Threonine 422 bears the Phosphothreonine mark. The HMG box DNA-binding region spans lysine 453 to glycine 521. A compositionally biased stretch (basic and acidic residues) spans aspartate 552–alanine 567. Positions alanine 603–leucine 623 are enriched in polar residues. Residues proline 632 to glutamine 648 show a composition bias toward acidic residues. 3 PHD-type zinc fingers span residues glutamate 667–glycine 713, isoleucine 714–serine 770, and valine 831–glycine 875. The PWWP 2 domain maps to phenylalanine 880–glycine 942. An AWS domain is found at serine 1011–glutamine 1061. Zn(2+) is bound by residues cysteine 1016, cysteine 1018, cysteine 1026, cysteine 1032, cysteine 1041, cysteine 1046, and cysteine 1052. Residues proline 1063–asparagine 1180 enclose the SET domain. Residues tryptophan 1075, threonine 1115–tyrosine 1118, and asparagine 1141–histidine 1142 contribute to the S-adenosyl-L-methionine site. Cysteine 1144 contributes to the Zn(2+) binding site. S-adenosyl-L-methionine is bound at residue asparagine 1186. Residues glutamate 1187 to glycine 1203 form the Post-SET domain. Zn(2+) is bound at residue cysteine 1191. Residue arginine 1192 coordinates S-adenosyl-L-methionine. Zn(2+)-binding residues include cysteine 1193 and cysteine 1198. The interval proline 1206–glycine 1232 is disordered. The segment covering lysine 1219–alanine 1230 has biased composition (basic residues). A PHD-type 4; atypical zinc finger spans residues glutamate 1239 to aspartate 1286. A disordered region spans residues arginine 1329–lysine 1365. The span at serine 1348–arginine 1359 shows a compositional bias: basic residues.

The protein belongs to the class V-like SAM-binding methyltransferase superfamily. Histone-lysine methyltransferase family. SET2 subfamily. In terms of assembly, interacts with HDAC1. Interacts (via PHD-type zinc fingers 1, 2 and 3) with SALL1. Interacts (via PHD-type 1, 2 and 3) with SALL4. Interacts with NANOG. Interacts with OGT. Interacts (via HMG box) with NKX2-5. In terms of tissue distribution, during B-cell development, expressed in early B2 cell progenitors (pre- and pro-B cells) with a decrease in expression at later stages.

Its subcellular location is the nucleus. The protein resides in the chromosome. The catalysed reaction is L-lysyl(36)-[histone H3] + S-adenosyl-L-methionine = N(6)-methyl-L-lysyl(36)-[histone H3] + S-adenosyl-L-homocysteine + H(+). It carries out the reaction L-lysyl(36)-[histone H3] + 2 S-adenosyl-L-methionine = N(6),N(6)-dimethyl-L-lysyl(36)-[histone H3] + 2 S-adenosyl-L-homocysteine + 2 H(+). Histone methyltransferase which specifically dimethylates nucleosomal histone H3 at 'Lys-36' (H3K36me2). Also monomethylates nucleosomal histone H3 at 'Lys-36' (H3K36me) in vitro. Does not trimethylate nucleosomal histone H3 at 'Lys-36' (H3K36me3). However, specifically trimethylates histone H3 at 'Lys-36' (H3K36me3) at euchromatic regions in embryonic stem (ES) cells. By methylating histone H3 at 'Lys-36', involved in the regulation of gene transcription during various biological processes. In ES cells, associates with developmental transcription factors such as SALL1 and represses inappropriate gene transcription mediated by histone deacetylation. During heart development, associates with transcription factor NKX2-5 to repress transcription of NKX2-5 target genes. Plays an essential role in adipogenesis, by regulating expression of genes involved in pre-adipocyte differentiation. During T-cell receptor (TCR) and CD28-mediated T-cell activation, promotes the transcription of transcription factor BCL6 which is required for follicular helper T (Tfh) cell differentiation. During B-cell development, required for the generation of the B1 lineage. During B2 cell activation, may contribute to the control of isotype class switch recombination (CRS), splenic germinal center formation, and the humoral immune response. Plays a role in class switch recombination of the immunoglobulin heavy chain (IgH) locus during B-cell activation. By regulating the methylation of histone H3 at 'Lys-36' and histone H4 at 'Lys-20' at the IgH locus, involved in TP53BP1 recruitment to the IgH switch region and promotes the transcription of IgA. In terms of biological role, histone methyltransferase which specifically dimethylates nucleosomal histone H3 at 'Lys-36' (H3K36me2). Mono-, di- and tri-methylates histone H3 at 'Lys-27' (H3K27me, H3K27me2, H3K27me3). Methylation of histone H3 at 'Lys-27' is controversial. May act as a transcription regulator that binds DNA and suppresses IL5 transcription through HDAC recruitment. This Mus musculus (Mouse) protein is Histone-lysine N-methyltransferase NSD2 (Nsd2).